The primary structure comprises 288 residues: MTEWSVWPAPAKINLFLHVLGRRADGYHELQTAFQLLGYGDRIWLRPRVDGRVERCSHLPGVAAEDDLTVRAARALQAATGSAGGVDIHVDKRLPAGGGVGGGSSDAATVLVALNHLWQTGLDEEALAGIGLALGADVPVFVRGRSAWGEGVGEQLRPMPVDPAGSRWYLVVDPGASISTAEVFGAPELTRDTSPITIPDLRAGAVRNDCEPVVRSRWPAVAEALEWLGRHGQARMSGTGSCCFVGFPGEAEAQAALERLPGAWSGFVAQAVERSPLHLTLAEAARTG.

Residue lysine 12 is part of the active site. ATP is bound at residue 95–105 (PAGGGVGGGSS). Aspartate 137 is an active-site residue.

The protein belongs to the GHMP kinase family. IspE subfamily.

The catalysed reaction is 4-CDP-2-C-methyl-D-erythritol + ATP = 4-CDP-2-C-methyl-D-erythritol 2-phosphate + ADP + H(+). It functions in the pathway isoprenoid biosynthesis; isopentenyl diphosphate biosynthesis via DXP pathway; isopentenyl diphosphate from 1-deoxy-D-xylulose 5-phosphate: step 3/6. Functionally, catalyzes the phosphorylation of the position 2 hydroxy group of 4-diphosphocytidyl-2C-methyl-D-erythritol. The chain is 4-diphosphocytidyl-2-C-methyl-D-erythritol kinase from Halorhodospira halophila (strain DSM 244 / SL1) (Ectothiorhodospira halophila (strain DSM 244 / SL1)).